The sequence spans 194 residues: MMKFLKQVGDYTKEAIQAGKYIGQGLSVTFDHMRRRPITVQYPYEKLILSERFRGRIHFEFDKCIACEVCVRVCPINLPVVDWEFNKETKKKKLNHYSIDFGVCIFCGNCVEYCPTNCLSMTEEYELSTYDRHELNYDNVALGRLPYKVTNDPMVTPLREFAYLPKGAIDPHDLPAGSRRAGLRPEEIVEQSQQ.

4Fe-4S ferredoxin-type domains follow at residues 55-84 and 95-124; these read GRIH…VDWE and NHYS…MTEE. 8 residues coordinate [4Fe-4S] cluster: C64, C67, C70, C74, C104, C107, C110, and C114. Residues 173–194 form a disordered region; sequence DLPAGSRRAGLRPEEIVEQSQQ.

This sequence belongs to the complex I 23 kDa subunit family. NDH-1 is composed of at least 11 different subunits. It depends on [4Fe-4S] cluster as a cofactor.

The protein localises to the cellular thylakoid membrane. The catalysed reaction is a plastoquinone + NADH + (n+1) H(+)(in) = a plastoquinol + NAD(+) + n H(+)(out). The enzyme catalyses a plastoquinone + NADPH + (n+1) H(+)(in) = a plastoquinol + NADP(+) + n H(+)(out). NDH-1 shuttles electrons from an unknown electron donor, via FMN and iron-sulfur (Fe-S) centers, to quinones in the respiratory and/or the photosynthetic chain. The immediate electron acceptor for the enzyme in this species is believed to be plastoquinone. Couples the redox reaction to proton translocation, and thus conserves the redox energy in a proton gradient. This chain is NAD(P)H-quinone oxidoreductase subunit I (ndhI), found in Leptolyngbya boryana (Plectonema boryanum).